Here is a 517-residue protein sequence, read N- to C-terminus: Ribonuclease Y (517 aa).

The helical transmembrane segment at A3 to A23 threads the bilayer. The region spanning T207–V292 is the KH domain. Positions V333–A426 constitute an HD domain.

It belongs to the RNase Y family.

It localises to the cell membrane. In terms of biological role, endoribonuclease that initiates mRNA decay. This is Ribonuclease Y from Symbiobacterium thermophilum (strain DSM 24528 / JCM 14929 / IAM 14863 / T).